The following is a 525-amino-acid chain: Ankyrin repeat and SOCS box protein 3 (525 aa).

11 ANK repeats span residues 9 to 38 (DTCS…SIDV), 42 to 71 (RGWM…SENY), 78 to 107 (EGFC…DPNA), 111 to 140 (EETT…NVNG), 145 to 174 (CGWN…NKEC), 178 to 207 (FGIT…DVNC), 211 to 240 (DKAT…DPDL), 246 to 275 (NWQL…RVCD), 279 to 308 (NKVS…SPDA), 315 to 346 (GFSS…QLNE), and 348 to 373 (HLAY…PSTP). Residues 441–505 (MLSARASNSS…HDYLLYAEVL (65 aa)) form the SOCS box domain.

The protein belongs to the ankyrin SOCS box (ASB) family. In terms of assembly, interacts with ELOB and TNFRSF1B.

The protein operates within protein modification; protein ubiquitination. Probable substrate-recognition component of a SCF-like ECS (Elongin-Cullin-SOCS-box protein) E3 ubiquitin-protein ligase complex which mediates the ubiquitination and subsequent proteasomal degradation of target proteins. Recognizes TNFRSF1B. The protein is Ankyrin repeat and SOCS box protein 3 (ASB3) of Bos taurus (Bovine).